A 308-amino-acid chain; its full sequence is UDP-N-acetylenolpyruvoylglucosamine reductase (308 aa).

Residues 32–196 enclose the FAD-binding PCMH-type domain; the sequence is VGGPAARLYK…ISAKLQLSPG (165 aa). Arg-176 is an active-site residue. The active-site Proton donor is the Ser-225. The active site involves Glu-296.

It belongs to the MurB family. Requires FAD as cofactor.

The protein localises to the cytoplasm. The enzyme catalyses UDP-N-acetyl-alpha-D-muramate + NADP(+) = UDP-N-acetyl-3-O-(1-carboxyvinyl)-alpha-D-glucosamine + NADPH + H(+). It functions in the pathway cell wall biogenesis; peptidoglycan biosynthesis. Its function is as follows. Cell wall formation. The protein is UDP-N-acetylenolpyruvoylglucosamine reductase of Legionella pneumophila subsp. pneumophila (strain Philadelphia 1 / ATCC 33152 / DSM 7513).